The sequence spans 508 residues: Photosystem II CP47 reaction center protein (508 aa).

6 helical membrane-spanning segments follow: residues 21-36 (SVHIMHTALVAGWAGS), 101-115 (IVFSGLCFLAAIWHW), 140-156 (GIHLFLSGVACFGFGAF), 203-218 (IAAGTLGILAGLFHLS), 237-252 (VLSSSIAAVFFAAFVV), and 457-472 (SFALLFFFGHIWHGSR).

This sequence belongs to the PsbB/PsbC family. PsbB subfamily. As to quaternary structure, PSII is composed of 1 copy each of membrane proteins PsbA, PsbB, PsbC, PsbD, PsbE, PsbF, PsbH, PsbI, PsbJ, PsbK, PsbL, PsbM, PsbT, PsbX, PsbY, PsbZ, Psb30/Ycf12, at least 3 peripheral proteins of the oxygen-evolving complex and a large number of cofactors. It forms dimeric complexes. Binds multiple chlorophylls. PSII binds additional chlorophylls, carotenoids and specific lipids. serves as cofactor.

Its subcellular location is the plastid. It is found in the chloroplast thylakoid membrane. In terms of biological role, one of the components of the core complex of photosystem II (PSII). It binds chlorophyll and helps catalyze the primary light-induced photochemical processes of PSII. PSII is a light-driven water:plastoquinone oxidoreductase, using light energy to abstract electrons from H(2)O, generating O(2) and a proton gradient subsequently used for ATP formation. The sequence is that of Photosystem II CP47 reaction center protein from Capsella bursa-pastoris (Shepherd's purse).